A 91-amino-acid chain; its full sequence is Probable Fe(2+)-trafficking protein (91 aa).

Belongs to the Fe(2+)-trafficking protein family.

Could be a mediator in iron transactions between iron acquisition and iron-requiring processes, such as synthesis and/or repair of Fe-S clusters in biosynthetic enzymes. In Glaesserella parasuis serovar 5 (strain SH0165) (Haemophilus parasuis), this protein is Probable Fe(2+)-trafficking protein.